A 263-amino-acid polypeptide reads, in one-letter code: MIEARDVSVDIAGKRIVGGVDFDARPGEVAAIVGPNGSGKTTFLKALSGEFAYTGRIALNGHNLSSMRPAEMAVHRAVLPQATTLSFPFTVREVVKLGLVGGRSGALPGEDARLPERALARVDLDGFAGRFYQELSGGEQQRVQLARVLCQVWAPVLDGKPRYLFLDEPVSSLDIKHQLIIMNIARDFAKRGGGVVAILHDLNLTSMYADRIFVMHRGRLAATGSPQDVLSDDLIEKVFDCRLRVGVLPAGNMPFVLPQSSVY.

An ABC transporter domain is found at 2 to 242 (IEARDVSVDI…DLIEKVFDCR (241 aa)). 34 to 41 (GPNGSGKT) contributes to the ATP binding site.

It belongs to the ABC transporter superfamily. Heme (hemin) importer (TC 3.A.1.14.5) family. The complex is composed of two ATP-binding proteins (HmuV), two transmembrane proteins (HmuU) and a solute-binding protein (HmuT).

It localises to the cell inner membrane. Part of the ABC transporter complex HmuTUV involved in hemin import. Responsible for energy coupling to the transport system. This Mesorhizobium japonicum (strain LMG 29417 / CECT 9101 / MAFF 303099) (Mesorhizobium loti (strain MAFF 303099)) protein is Hemin import ATP-binding protein HmuV.